Here is a 226-residue protein sequence, read N- to C-terminus: Ribonuclease 3 (226 aa).

In terms of domain architecture, RNase III spans 6 to 128; sequence INRLQRKLGY…LIGGVFLDSD (123 aa). Glu-41 provides a ligand contact to Mg(2+). The active site involves Asp-45. Mg(2+) is bound by residues Asp-114 and Glu-117. Glu-117 is a catalytic residue. A DRBM domain is found at 155 to 225; it reads DPKTRLQEYL…AEQALKKLEL (71 aa).

The protein belongs to the ribonuclease III family. Homodimer. It depends on Mg(2+) as a cofactor.

The protein localises to the cytoplasm. It carries out the reaction Endonucleolytic cleavage to 5'-phosphomonoester.. Its function is as follows. Digests double-stranded RNA. Involved in the processing of primary rRNA transcript to yield the immediate precursors to the large and small rRNAs (23S and 16S). Processes some mRNAs, and tRNAs when they are encoded in the rRNA operon. Processes pre-crRNA and tracrRNA of type II CRISPR loci if present in the organism. The sequence is that of Ribonuclease 3 from Escherichia coli O139:H28 (strain E24377A / ETEC).